Here is a 34-residue protein sequence, read N- to C-terminus: Potassium channel toxin (34 aa).

3 disulfides stabilise this stretch: cysteine 6–cysteine 25, cysteine 11–cysteine 29, and cysteine 15–cysteine 31.

The protein belongs to the short scorpion toxin superfamily. Potassium channel inhibitor family. Alpha-KTx 21 subfamily. As to expression, expressed by the venom gland.

The protein localises to the secreted. Toxin that blocks voltage-gated potassium channels (Kv). The sequence is that of Potassium channel toxin from Tityus metuendus (Scorpion).